A 188-amino-acid polypeptide reads, in one-letter code: PRA1 family protein F3 (188 aa).

Helical transmembrane passes span 74-94, 95-115, 123-143, and 145-165; these read IVVL…LIVF, TVLV…IKLF, TVLI…NATF, and IVGA…VRKT.

Belongs to the PRA1 family. In terms of assembly, interacts with PRA1F2 and PRA1D. Interacts with ACD11 and BPA1. Expressed in lateral roots, lateral root caps and columella cells.

Its subcellular location is the endoplasmic reticulum membrane. It is found in the membrane. The protein resides in the cytoplasm. Its function is as follows. May be involved in both secretory and endocytic intracellular trafficking in the endosomal/prevacuolar compartments. This Arabidopsis thaliana (Mouse-ear cress) protein is PRA1 family protein F3.